The primary structure comprises 241 residues: 3-deoxy-manno-octulosonate cytidylyltransferase (241 aa).

This sequence belongs to the KdsB family.

It localises to the cytoplasm. It catalyses the reaction 3-deoxy-alpha-D-manno-oct-2-ulosonate + CTP = CMP-3-deoxy-beta-D-manno-octulosonate + diphosphate. The protein operates within nucleotide-sugar biosynthesis; CMP-3-deoxy-D-manno-octulosonate biosynthesis; CMP-3-deoxy-D-manno-octulosonate from 3-deoxy-D-manno-octulosonate and CTP: step 1/1. Its pathway is bacterial outer membrane biogenesis; lipopolysaccharide biosynthesis. Functionally, activates KDO (a required 8-carbon sugar) for incorporation into bacterial lipopolysaccharide in Gram-negative bacteria. This is 3-deoxy-manno-octulosonate cytidylyltransferase from Rickettsia rickettsii (strain Sheila Smith).